Reading from the N-terminus, the 878-residue chain is Lon protease 2 (878 aa).

Positions 85 to 281 (LYLLPVKERP…KVLSLFKHEI (197 aa)) constitute a Lon N-terminal domain. 434-441 (GPPGVGKT) is an ATP binding site. The Lon proteolytic domain maps to 668 to 850 (NQQMGTVTGL…DDVAKLTFHI (183 aa)). Residues Ser-756 and Lys-799 contribute to the active site.

It belongs to the peptidase S16 family. As to quaternary structure, homohexamer. Organized in a ring with a central cavity.

Its subcellular location is the cytoplasm. It catalyses the reaction Hydrolysis of proteins in presence of ATP.. Its function is as follows. ATP-dependent serine protease that mediates the selective degradation of mutant and abnormal proteins as well as certain short-lived regulatory proteins. Required for cellular homeostasis and for survival from DNA damage and developmental changes induced by stress. Degrades polypeptides processively to yield small peptide fragments that are 5 to 10 amino acids long. Binds to DNA in a double-stranded, site-specific manner. The chain is Lon protease 2 from Hydrogenovibrio crunogenus (strain DSM 25203 / XCL-2) (Thiomicrospira crunogena).